A 286-amino-acid polypeptide reads, in one-letter code: ATP synthase gamma chain (286 aa).

It belongs to the ATPase gamma chain family. F-type ATPases have 2 components, CF(1) - the catalytic core - and CF(0) - the membrane proton channel. CF(1) has five subunits: alpha(3), beta(3), gamma(1), delta(1), epsilon(1). CF(0) has three main subunits: a, b and c.

It is found in the cell inner membrane. Functionally, produces ATP from ADP in the presence of a proton gradient across the membrane. The gamma chain is believed to be important in regulating ATPase activity and the flow of protons through the CF(0) complex. In Pseudomonas putida (strain W619), this protein is ATP synthase gamma chain.